A 354-amino-acid chain; its full sequence is Protein RecA (354 aa).

68 to 75 (GPESSGKT) is an ATP binding site.

This sequence belongs to the RecA family.

Its subcellular location is the cytoplasm. Its function is as follows. Can catalyze the hydrolysis of ATP in the presence of single-stranded DNA, the ATP-dependent uptake of single-stranded DNA by duplex DNA, and the ATP-dependent hybridization of homologous single-stranded DNAs. It interacts with LexA causing its activation and leading to its autocatalytic cleavage. The sequence is that of Protein RecA from Synechocystis sp. (strain ATCC 27184 / PCC 6803 / Kazusa).